The following is a 265-amino-acid chain: Undecaprenyl-diphosphatase (265 aa).

The next 8 membrane-spanning stretches (helical) occupy residues 1–21, 40–60, 87–107, 113–133, 151–173, 188–208, 214–234, and 244–264; these read MDWL…FLPI, GLAF…LAFH, WAVI…ENVI, ASLV…WADV, IIGF…TITA, SFLL…VELI, VAWG…WLCI, and IGML…LVWV.

This sequence belongs to the UppP family.

The protein resides in the cell inner membrane. It catalyses the reaction di-trans,octa-cis-undecaprenyl diphosphate + H2O = di-trans,octa-cis-undecaprenyl phosphate + phosphate + H(+). In terms of biological role, catalyzes the dephosphorylation of undecaprenyl diphosphate (UPP). Confers resistance to bacitracin. The protein is Undecaprenyl-diphosphatase of Chromohalobacter salexigens (strain ATCC BAA-138 / DSM 3043 / CIP 106854 / NCIMB 13768 / 1H11).